The chain runs to 410 residues: Eukaryotic initiation factor 4A (410 aa).

A Q motif motif is present at residues 37–65 (ESFDSMGLQENLLRGIYAYGFEKPSAIQQ). In terms of domain architecture, Helicase ATP-binding spans 68–238 (IVPFCKGLDV…RKFMNKPVRI (171 aa)). Residue 81-88 (AQSGTGKT) participates in ATP binding. Positions 186–189 (DEAD) match the DEAD box motif. In terms of domain architecture, Helicase C-terminal spans 249–410 (GIKQFYVNID…ELPANVADLL (162 aa)).

This sequence belongs to the DEAD box helicase family. eIF4A subfamily. In terms of assembly, eIF4F is a multi-subunit complex, the composition of which varies with external and internal environmental conditions. It is composed of at least EIF4A, EIF4E and EIF4G.

It catalyses the reaction ATP + H2O = ADP + phosphate + H(+). ATP-dependent RNA helicase which is a subunit of the eIF4F complex involved in cap recognition and is required for mRNA binding to ribosome. In the current model of translation initiation, eIF4A unwinds RNA secondary structures in the 5'-UTR of mRNAs which is necessary to allow efficient binding of the small ribosomal subunit, and subsequent scanning for the initiator codon. This chain is Eukaryotic initiation factor 4A, found in Zea mays (Maize).